The sequence spans 304 residues: N-acetylmuramic acid 6-phosphate etherase 1 (304 aa).

Positions 1–10 (MENSHLGSLT) are enriched in polar residues. The tract at residues 1–20 (MENSHLGSLTTERRNERSKR) is disordered. Residues 58–221 (AVGSLKKGGR…STAAMIKMGK (164 aa)) enclose the SIS domain. The active-site Proton donor is the glutamate 86. Glutamate 117 is an active-site residue.

This sequence belongs to the GCKR-like family. MurNAc-6-P etherase subfamily. Homodimer.

The enzyme catalyses N-acetyl-D-muramate 6-phosphate + H2O = N-acetyl-D-glucosamine 6-phosphate + (R)-lactate. Its pathway is amino-sugar metabolism; N-acetylmuramate degradation. Functionally, specifically catalyzes the cleavage of the D-lactyl ether substituent of MurNAc 6-phosphate, producing GlcNAc 6-phosphate and D-lactate. The sequence is that of N-acetylmuramic acid 6-phosphate etherase 1 from Bacillus licheniformis (strain ATCC 14580 / DSM 13 / JCM 2505 / CCUG 7422 / NBRC 12200 / NCIMB 9375 / NCTC 10341 / NRRL NRS-1264 / Gibson 46).